A 127-amino-acid chain; its full sequence is Ribosome-binding factor A (127 aa).

It belongs to the RbfA family. In terms of assembly, monomer. Binds 30S ribosomal subunits, but not 50S ribosomal subunits or 70S ribosomes.

The protein resides in the cytoplasm. Its function is as follows. One of several proteins that assist in the late maturation steps of the functional core of the 30S ribosomal subunit. Associates with free 30S ribosomal subunits (but not with 30S subunits that are part of 70S ribosomes or polysomes). Required for efficient processing of 16S rRNA. May interact with the 5'-terminal helix region of 16S rRNA. The chain is Ribosome-binding factor A from Geobacillus kaustophilus (strain HTA426).